A 143-amino-acid chain; its full sequence is Acyl carrier protein 3, chloroplastic (143 aa).

The N-terminal 60 residues, 1–60 (MATAAAGSSLICIKSASCSLNRAQVPSGLSSLRSVSLPISGKIFPSLRSSRGPLSFRVCC), are a transit peptide targeting the chloroplast. The 76-residue stretch at 64 to 139 (QETVTRVCEI…DAADLIEKLV (76 aa)) folds into the Carrier domain. The residue at position 99 (S99) is an O-(pantetheine 4'-phosphoryl)serine.

The protein belongs to the acyl carrier protein (ACP) family. 4'-phosphopantetheine is transferred from CoA to a specific serine of apo-ACP by acpS. This modification is essential for activity because fatty acids are bound in thioester linkage to the sulfhydryl of the prosthetic group.

Its subcellular location is the plastid. It localises to the chloroplast. It functions in the pathway lipid metabolism; fatty acid biosynthesis. Carrier of the growing fatty acid chain in fatty acid biosynthesis. The chain is Acyl carrier protein 3, chloroplastic (ACL1.3) from Cuphea lanceolata (Cigar flower).